A 138-amino-acid polypeptide reads, in one-letter code: Superoxide dismutase [Mn] (138 aa).

Q1, H49, D133, and H137 together coordinate Mn(2+).

Belongs to the iron/manganese superoxide dismutase family. The cofactor is Mn(2+).

It carries out the reaction 2 superoxide + 2 H(+) = H2O2 + O2. In terms of biological role, destroys superoxide anion radicals which are normally produced within the cells and which are toxic to biological systems. The chain is Superoxide dismutase [Mn] (sodA) from Mycobacteroides chelonae (Mycobacterium chelonae).